The primary structure comprises 184 residues: Fe/S biogenesis protein NfuA (184 aa).

2 residues coordinate [4Fe-4S] cluster: cysteine 142 and cysteine 145.

The protein belongs to the NfuA family. Homodimer. The cofactor is [4Fe-4S] cluster.

Functionally, involved in iron-sulfur cluster biogenesis. Binds a 4Fe-4S cluster, can transfer this cluster to apoproteins, and thereby intervenes in the maturation of Fe/S proteins. Could also act as a scaffold/chaperone for damaged Fe/S proteins. The polypeptide is Fe/S biogenesis protein NfuA (Wigglesworthia glossinidia brevipalpis).